The primary structure comprises 193 residues: Rho-related protein racF2 (193 aa).

10–17 (GDGAVGKT) serves as a coordination point for GTP. The Effector region motif lies at 32–40 (YLPTVFDNY). GTP-binding positions include 57 to 61 (DTAGQ) and 115 to 118 (TKQD). Cys-190 is subject to Cysteine methyl ester. A lipid anchor (S-geranylgeranyl cysteine) is attached at Cys-190. Positions 191–193 (TIM) are cleaved as a propeptide — removed in mature form.

It belongs to the small GTPase superfamily. Rho family.

The protein resides in the cell membrane. The sequence is that of Rho-related protein racF2 (racF2) from Dictyostelium discoideum (Social amoeba).